The primary structure comprises 141 residues: Large ribosomal subunit protein uL16 (141 aa).

A disordered region spans residues 1–23 (MLMPKRTKYRKQMKGRNRGKAHR).

Belongs to the universal ribosomal protein uL16 family. As to quaternary structure, part of the 50S ribosomal subunit.

Functionally, binds 23S rRNA and is also seen to make contacts with the A and possibly P site tRNAs. This chain is Large ribosomal subunit protein uL16, found in Helicobacter pylori (strain P12).